Reading from the N-terminus, the 283-residue chain is Non-selective voltage-gated ion channel VDAC3 (283 aa).

Residue Cys2 is modified to N-acetylcysteine. Residue Thr4 is modified to Phosphothreonine. An N6-acetyllysine mark is found at Lys12, Lys15, and Lys20. Beta stranded transmembrane passes span 26–35 (MVKIDLKTKS) and 39–47 (VEFSTSGHA). A Glycyl lysine isopeptide (Lys-Gly) (interchain with G-Cter in ubiquitin) cross-link involves residue Lys53. Beta stranded transmembrane passes span 54–64 (ASGNLETKYKV), 69–76 (LTFTQKWN), and 80–89 (TLGTEISWEN). N6-acetyllysine is present on Lys90. The chain crosses the membrane as a beta stranded span at residues 95 to 104 (LKLTLDTIFV). Glycyl lysine isopeptide (Lys-Gly) (interchain with G-Cter in ubiquitin) cross-links involve residues Lys109 and Lys110. The next 10 beta stranded transmembrane spans lie at 111-120 (SGKLKASYRR), 123-130 (FSLGSNVD), 137-145 (TIYGWAVLA), 150-158 (LAGYQMSFD), 163-175 (KLSQ…GYKA), 178-185 (FQLHTHVN), 189-198 (EFGGSIYQKV), 202-211 (IETSINLAWT), 218-227 (RFGIAAKYKL), and 231-238 (TSLSAKVN). At Ser241 the chain carries Phosphoserine. Residues 242 to 244 (LIG) and 260 to 264 (SALID) each bind NAD(+). The next 2 membrane-spanning stretches (beta stranded) occupy residues 242-251 (LIGLGYTQTL) and 254-263 (GVKLTLSALI). The residue at position 266 (Lys266) is an N6-acetyllysine; alternate. Residue Lys266 forms a Glycyl lysine isopeptide (Lys-Gly) (interchain with G-Cter in ubiquitin); alternate linkage. A beta stranded transmembrane segment spans residues 273–282 (HKVGLGFELE).

It belongs to the eukaryotic mitochondrial porin family. In terms of assembly, interacts with ARMC12 in a TBC1D21-dependent manner. Interacts with MISFA. Post-translationally, ubiquitinated by PRKN during mitophagy, leading to its degradation and enhancement of mitophagy. Deubiquitinated by USP30. Highest levels of expression detected in testis, less but still abundant expression in heart, kidney, brain, and skeletal muscle.

The protein resides in the mitochondrion outer membrane. Its subcellular location is the membrane. It carries out the reaction chloride(in) = chloride(out). The enzyme catalyses K(+)(in) = K(+)(out). Functionally, non-selective voltage-gated ion channel that mediates the transport of anions and cations through the mitochondrion outer membrane and plasma membrane. Forms a high-conducting channel with a stable open state and a voltage-induced closure with a mild preference for anions over cations. Involved in male fertility and sperm mitochondrial sheath formation. This chain is Non-selective voltage-gated ion channel VDAC3, found in Mus musculus (Mouse).